We begin with the raw amino-acid sequence, 71 residues long: Light-harvesting protein B-800/850 alpha chain (71 aa).

Residues 1–15 (MNQGKVWRVVKPTVG) lie on the Cytoplasmic side of the membrane. Residues 16–36 (VPVYLGAVAVTALILHGGLLA) traverse the membrane as a helical segment. His-31 provides a ligand contact to a bacteriochlorophyll. The Periplasmic portion of the chain corresponds to 37–50 (KTDWFGAYWNGGKK). Residues 51–71 (AAAAAAAVAPAPVAAPQAPAQ) form a helical membrane-spanning segment.

This sequence belongs to the antenna complex alpha subunit family. In terms of assembly, an alpha/beta heterodimer conjugated to 3 bacteriochlorophyll molecules. The core complex is formed by different alpha and beta chains, binding bacteriochlorophyll molecules, and arranged most probably in tetrameric structures disposed around the reaction center. The non-pigmented gamma chains may constitute additional components.

It localises to the cell membrane. In terms of biological role, antenna complexes are light-harvesting systems, which transfer the excitation energy to the reaction centers. This is Light-harvesting protein B-800/850 alpha chain (pucA) from Rubrivivax gelatinosus (Rhodocyclus gelatinosus).